The chain runs to 561 residues: Long-chain-fatty-acid--CoA ligase (561 aa).

Residue 213–224 (YTGGTTGVAKGA) participates in ATP binding.

It belongs to the ATP-dependent AMP-binding enzyme family. Mg(2+) serves as cofactor.

The protein resides in the membrane. It carries out the reaction a long-chain fatty acid + ATP + CoA = a long-chain fatty acyl-CoA + AMP + diphosphate. It participates in lipid metabolism; fatty acid beta-oxidation. Catalyzes the esterification, concomitant with transport, of exogenous long-chain fatty acids into metabolically active CoA thioesters for subsequent degradation or incorporation into phospholipids. The protein is Long-chain-fatty-acid--CoA ligase (fadD) of Salmonella typhi.